The primary structure comprises 756 residues: 5-methyltetrahydropteroyltriglutamate--homocysteine methyltransferase (756 aa).

5-methyltetrahydropteroyltri-L-glutamate contacts are provided by residues 16 to 19 and K112; that span reads RELK. L-homocysteine is bound by residues 432 to 434 and E485; that span reads IGS. L-methionine is bound by residues 432–434 and E485; that span reads IGS. 5-methyltetrahydropteroyltri-L-glutamate is bound by residues 516–517 and W562; that span reads RC. Residue D600 participates in L-homocysteine binding. D600 contacts L-methionine. Position 606 (E606) interacts with 5-methyltetrahydropteroyltri-L-glutamate. Residues H642, C644, and E666 each coordinate Zn(2+). Residue H695 is the Proton donor of the active site. Position 727 (C727) interacts with Zn(2+).

It belongs to the vitamin-B12 independent methionine synthase family. It depends on Zn(2+) as a cofactor.

It carries out the reaction 5-methyltetrahydropteroyltri-L-glutamate + L-homocysteine = tetrahydropteroyltri-L-glutamate + L-methionine. It participates in amino-acid biosynthesis; L-methionine biosynthesis via de novo pathway; L-methionine from L-homocysteine (MetE route): step 1/1. Catalyzes the transfer of a methyl group from 5-methyltetrahydrofolate to homocysteine resulting in methionine formation. The sequence is that of 5-methyltetrahydropteroyltriglutamate--homocysteine methyltransferase from Haemophilus influenzae (strain ATCC 51907 / DSM 11121 / KW20 / Rd).